A 66-amino-acid chain; its full sequence is Moricin-2 (66 aa).

The signal sequence occupies residues 1-24 (MNILKLFFVFIVAMSLVSCSTAAP).

In terms of tissue distribution, expressed in fat body and to a lesser extent in hemocyte and Malpighian tubules.

It is found in the secreted. Has antibacterial activity against Gram-positive and Gram-negative bacteria. Probably acts by disturbing membrane functions with its amphipathic structure. The sequence is that of Moricin-2 (MOR2) from Bombyx mori (Silk moth).